Here is a 480-residue protein sequence, read N- to C-terminus: 2-phosphoxylose phosphatase 1 (480 aa).

Residues 1 to 6 (MLHRNR) are Cytoplasmic-facing. A helical; Signal-anchor for type II membrane protein membrane pass occupies residues 7–27 (FLVLLALAGLLAFLSLSLQFF). Residues 28–480 (HLIPVSATKN…YYDACHGEGA (453 aa)) are Lumenal-facing. The active-site Nucleophile is H97. Residues N194, N305, and N354 are each glycosylated (N-linked (GlcNAc...) asparagine). D379 functions as the Proton donor in the catalytic mechanism.

The protein belongs to the histidine acid phosphatase family. Interacts with B3GAT3; the interaction increases the 2-phosphoxylose phosphatase activity of PXYLP1 during completion of linkage region formation in a B3GAT3-mediated manner.

The protein resides in the golgi apparatus membrane. It carries out the reaction 3-O-[beta-D-GlcA-(1-&gt;3)-beta-D-Gal-(1-&gt;3)-beta-D-Gal-(1-&gt;4)-beta-D-2-O-P-Xyl]-L-seryl-[protein] + H2O = 3-O-(beta-D-GlcA-(1-&gt;3)-beta-D-Gal-(1-&gt;3)-beta-D-Gal-(1-&gt;4)-beta-D-Xyl)-L-seryl-[protein] + phosphate. Functionally, responsible for the 2-O-dephosphorylation of xylose in the glycosaminoglycan-protein linkage region of proteoglycans thereby regulating the amount of mature glycosaminoglycan (GAG) chains. Sulfated glycosaminoglycans (GAGs), including heparan sulfate and chondroitin sulfate, are synthesized on the so-called common GAG-protein linkage region (GlcUAbeta1-3Galbeta1-3Galbeta1-4Xylbeta1-O-Ser) of core proteins, which is formed by the stepwise addition of monosaccharide residues by the respective specific glycosyltransferases. Xylose 2-O-dephosphorylation during completion of linkage region formation is a prerequisite for the initiation and efficient elongation of the repeating disaccharide region of GAG chains. This chain is 2-phosphoxylose phosphatase 1, found in Mus musculus (Mouse).